Here is a 78-residue protein sequence, read N- to C-terminus: Large ribosomal subunit protein bL28 (78 aa).

The protein belongs to the bacterial ribosomal protein bL28 family.

The sequence is that of Large ribosomal subunit protein bL28 from Prochlorococcus marinus (strain MIT 9215).